A 291-amino-acid polypeptide reads, in one-letter code: ADP-dependent (S)-NAD(P)H-hydrate dehydratase (291 aa).

The YjeF C-terminal domain occupies 5–273; that stretch reads SKDILEEVIT…QALPTYMKKY (269 aa). 3 residues coordinate (6S)-NADPHX: alanine 40, glycine 103, and histidine 153. Glycine 215 serves as a coordination point for AMP. Aspartate 216 is a binding site for (6S)-NADPHX.

This sequence belongs to the NnrD/CARKD family. In terms of assembly, homotetramer. It depends on Mg(2+) as a cofactor.

The enzyme catalyses (6S)-NADHX + ADP = AMP + phosphate + NADH + H(+). It carries out the reaction (6S)-NADPHX + ADP = AMP + phosphate + NADPH + H(+). In terms of biological role, catalyzes the dehydration of the S-form of NAD(P)HX at the expense of ADP, which is converted to AMP. Together with NAD(P)HX epimerase, which catalyzes the epimerization of the S- and R-forms, the enzyme allows the repair of both epimers of NAD(P)HX, a damaged form of NAD(P)H that is a result of enzymatic or heat-dependent hydration. This is ADP-dependent (S)-NAD(P)H-hydrate dehydratase from Enterococcus faecalis (strain ATCC 700802 / V583).